Reading from the N-terminus, the 1337-residue chain is ABC transporter D family member 1 (1337 aa).

Transmembrane regions (helical) follow at residues 24-44 (ILLA…KSRV), 142-162 (APLF…LSTL), 247-267 (YASP…GTAI), and 342-362 (FLLK…PFFS). The ABC transmembrane type-1 1 domain maps to 117–395 (VFRTALSNRL…SVIISLFQAL (279 aa)). Positions 448-695 (VEFSDVKVVT…DAMVVQRAFA (248 aa)) constitute an ABC transporter 1 domain. 481 to 488 (GPNGSGKS) contacts ATP. The 299-residue stretch at 751-1049 (LIPTIFDKQG…VVSQSFMAFG (299 aa)) folds into the ABC transmembrane type-1 2 domain. The helical transmembrane segment at 900–920 (LLTGQRGVAILYTYMLLGLGF) threads the bilayer. Residues 1091–1337 (LDSQDLLSFS…ELRSIEQTTE (247 aa)) form the ABC transporter 2 domain. 1130–1137 (GPNGSGKT) is an ATP binding site.

The protein belongs to the ABC transporter superfamily. ABCD family. Peroxisomal fatty acyl CoA transporter (TC 3.A.1.203) subfamily.

The protein resides in the peroxisome membrane. It is found in the glyoxysome membrane. The enzyme catalyses an acyl-CoA(out) + ATP + H2O = an acyl-CoA(in) + ADP + phosphate + H(+). Contributes to the transport of fatty acids and their derivatives (acyl CoAs) across the peroxisomal membrane. Provides acetate to the glyoxylate cycle in developing seedlings. Involved in pollen tube elongation, ovule fertilization, and seeds germination after imbibition (controls the switch between the opposing developmental programs of dormancy and germination), probably by promoting beta-oxidation of storage lipids during gluconeogenesis. Required for biosynthesis of jasmonic acid and conversion of indole butyric acid to indole acetic acid. Confers sensitivity to monofluoroacetic acid (FAc), a toxic acetate analog, and to 2,4-dichlorophenoxybutyric acid (2,4-DB) and indole-3-butyric acid (IBA), two precursors of auxin after beta-oxidation. This chain is ABC transporter D family member 1, found in Arabidopsis thaliana (Mouse-ear cress).